Reading from the N-terminus, the 145-residue chain is Partner of bursicon (145 aa).

A signal peptide spans 1 to 28; sequence MKENFSIMFIHSIFLILIIFIYSNETIA. 5 cysteine pairs are disulfide-bonded: Cys-36/Cys-94, Cys-60/Cys-109, Cys-69/Cys-135, Cys-73/Cys-137, and Cys-91/Cys-140. Positions 36–131 constitute a CTCK domain; it reads CETLQSEVHI…NGVMEIKIRE (96 aa).

As to quaternary structure, heterodimer of burs and pburs.

It is found in the secreted. In terms of biological role, final heterodimeric neurohormone released at the end of the molting cycle, involved in the sclerotization (tanning) of the insect cuticle, melanization and wing spreading. The sequence is that of Partner of bursicon (pburs) from Apis mellifera (Honeybee).